The sequence spans 95 residues: Aspartyl/glutamyl-tRNA(Asn/Gln) amidotransferase subunit C (95 aa).

Belongs to the GatC family. Heterotrimer of A, B and C subunits.

It carries out the reaction L-glutamyl-tRNA(Gln) + L-glutamine + ATP + H2O = L-glutaminyl-tRNA(Gln) + L-glutamate + ADP + phosphate + H(+). It catalyses the reaction L-aspartyl-tRNA(Asn) + L-glutamine + ATP + H2O = L-asparaginyl-tRNA(Asn) + L-glutamate + ADP + phosphate + 2 H(+). In terms of biological role, allows the formation of correctly charged Asn-tRNA(Asn) or Gln-tRNA(Gln) through the transamidation of misacylated Asp-tRNA(Asn) or Glu-tRNA(Gln) in organisms which lack either or both of asparaginyl-tRNA or glutaminyl-tRNA synthetases. The reaction takes place in the presence of glutamine and ATP through an activated phospho-Asp-tRNA(Asn) or phospho-Glu-tRNA(Gln). In Bradyrhizobium sp. (strain BTAi1 / ATCC BAA-1182), this protein is Aspartyl/glutamyl-tRNA(Asn/Gln) amidotransferase subunit C.